Here is a 171-residue protein sequence, read N- to C-terminus: NADH-ubiquinone oxidoreductase chain 6 (171 aa).

5 helical membrane passes run 1-21, 25-44, 49-71, 85-105, and 150-170; these read MYVMFLLSILLVLGFVSISSK, IYGGVGLIVSGAVGCGIIMG, FMGLMVFLIYLGGMLVVFGYTTA, VVIWGVVLLGVGMELFMVAWM, and WFAAIAGWSLFISVLIVIEII.

Belongs to the complex I subunit 6 family. As to quaternary structure, core subunit of respiratory chain NADH dehydrogenase (Complex I) which is composed of 45 different subunits.

The protein localises to the mitochondrion inner membrane. The enzyme catalyses a ubiquinone + NADH + 5 H(+)(in) = a ubiquinol + NAD(+) + 4 H(+)(out). Core subunit of the mitochondrial membrane respiratory chain NADH dehydrogenase (Complex I) which catalyzes electron transfer from NADH through the respiratory chain, using ubiquinone as an electron acceptor. Essential for the catalytic activity and assembly of complex I. The sequence is that of NADH-ubiquinone oxidoreductase chain 6 (MT-ND6) from Lemur catta (Ring-tailed lemur).